Here is a 297-residue protein sequence, read N- to C-terminus: Ribosomal RNA small subunit methyltransferase H (297 aa).

S-adenosyl-L-methionine-binding positions include 34 to 36, Asp54, Phe88, Asp106, and Gln113; that span reads AGH. Residues 272–297 form a disordered region; that stretch reads PLTAGEEETDRNPRARSAKLRAAEKK.

Belongs to the methyltransferase superfamily. RsmH family.

Its subcellular location is the cytoplasm. The enzyme catalyses cytidine(1402) in 16S rRNA + S-adenosyl-L-methionine = N(4)-methylcytidine(1402) in 16S rRNA + S-adenosyl-L-homocysteine + H(+). Specifically methylates the N4 position of cytidine in position 1402 (C1402) of 16S rRNA. This Acidobacterium capsulatum (strain ATCC 51196 / DSM 11244 / BCRC 80197 / JCM 7670 / NBRC 15755 / NCIMB 13165 / 161) protein is Ribosomal RNA small subunit methyltransferase H.